A 229-amino-acid chain; its full sequence is Heptahelical transmembrane protein ADIPOR2 (229 aa).

Over 1–4 (MQGA) the chain is Cytoplasmic. Residues 5-25 (ASHDAAAAAAAAAVLGGGHGV) traverse the membrane as a helical segment. Residues 26–30 (PRWPR) are Extracellular-facing. Residues 31 to 51 (MVFLVGAMTCLAISATAHLLA) form a helical membrane-spanning segment. The Cytoplasmic segment spans residues 52 to 66 (CHSRRASVVFWQLDY). Residues 67–87 (AGISAMIVASFVPPVYYAFLC) traverse the membrane as a helical segment. At 88–92 (HRPAR) the chain is on the extracellular side. The chain crosses the membrane as a helical span at residues 93 to 113 (VAYLSAISALGALVVGALLSP). Over 114–124 (PCSSPRFRRLR) the chain is Cytoplasmic. A helical transmembrane segment spans residues 125–145 (AALFLAMGLSGVVPALHALWL). At 146–153 (NWGHAACY) the chain is on the extracellular side. Residues 154 to 174 (LALSLEVAMGLAYAAGAWFYV) traverse the membrane as a helical segment. Residues 175–194 (SRVPEKWRPGVFDVVGHSHQ) are Cytoplasmic-facing. A helical membrane pass occupies residues 195–215 (IFHVLVLVGAVTHYVAVDVLL). Topologically, residues 216-229 (NWRETVAAACSATS) are extracellular.

It belongs to the ADIPOR family.

The protein localises to the membrane. In terms of biological role, may play a role in abiotic stress response. This chain is Heptahelical transmembrane protein ADIPOR2 (ADIPOR2), found in Oryza sativa subsp. japonica (Rice).